Reading from the N-terminus, the 622-residue chain is Protein lev-9 (622 aa).

A signal peptide spans 1–16 (MRFLLLLAISITYASA). The WAP; atypical domain occupies 17–61 (LSCPEVTLSQRPKHCKKECIADEDCKRNKRCMCDGECGLSCVNPI). 19 disulfides stabilise this stretch: Cys-19/Cys-49, Cys-35/Cys-47, Cys-41/Cys-57, Cys-64/Cys-105, Cys-91/Cys-118, Cys-124/Cys-171, Cys-154/Cys-188, Cys-193/Cys-233, Cys-219/Cys-246, Cys-251/Cys-291, Cys-277/Cys-304, Cys-309/Cys-349, Cys-335/Cys-362, Cys-366/Cys-409, Cys-395/Cys-420, Cys-425/Cys-467, Cys-452/Cys-481, Cys-486/Cys-543, and Cys-529/Cys-556. Sushi domains lie at 62–120 (AMCH…VCRL), 122–190 (LKCG…RCKA), 191–248 (RACP…NCKA), 249–306 (TECS…RCEE), 307–364 (IRCS…RCLA), 365–422 (SCRV…VCSP), 423–483 (LSCH…KCLP), and 484–558 (SWCE…KCVS). A glycan (N-linked (GlcNAc...) asparagine) is linked at Asn-411. A propeptide spanning residues 576–622 (SLPGRAVREYVDDELSTHRQHSGKCGIVSGKLERMIMQHSDNGVSVC) is cleaved from the precursor.

In terms of processing, proteolytic processing of the C-terminus is required for clustering activity but not for secretion nor traffic.

Its subcellular location is the synapse. The protein localises to the secreted. Its function is as follows. Scaffolding protein that is necessary to cluster acetylcholine receptors at neuromuscular junctions. This chain is Protein lev-9 (lev-9), found in Caenorhabditis elegans.